We begin with the raw amino-acid sequence, 279 residues long: Urease accessory protein UreD (279 aa).

This sequence belongs to the UreD family. As to quaternary structure, ureD, UreF and UreG form a complex that acts as a GTP-hydrolysis-dependent molecular chaperone, activating the urease apoprotein by helping to assemble the nickel containing metallocenter of UreC. The UreE protein probably delivers the nickel.

It is found in the cytoplasm. In terms of biological role, required for maturation of urease via the functional incorporation of the urease nickel metallocenter. This chain is Urease accessory protein UreD, found in Pseudomonas fluorescens (strain ATCC BAA-477 / NRRL B-23932 / Pf-5).